Reading from the N-terminus, the 510-residue chain is Glycerol kinase (510 aa).

Residue threonine 14 participates in ADP binding. The ATP site is built by threonine 14 and threonine 15. Residue threonine 14 coordinates sn-glycerol 3-phosphate. Residue arginine 18 coordinates ADP. Sn-glycerol 3-phosphate-binding residues include arginine 84, glutamate 85, tyrosine 136, and aspartate 256. Glycerol contacts are provided by arginine 84, glutamate 85, tyrosine 136, aspartate 256, and glutamine 257. Positions 278, 322, 422, and 426 each coordinate ADP. 3 residues coordinate ATP: threonine 278, glycine 322, and glycine 422.

The protein belongs to the FGGY kinase family.

The catalysed reaction is glycerol + ATP = sn-glycerol 3-phosphate + ADP + H(+). It functions in the pathway polyol metabolism; glycerol degradation via glycerol kinase pathway; sn-glycerol 3-phosphate from glycerol: step 1/1. Functionally, key enzyme in the regulation of glycerol uptake and metabolism. Catalyzes the phosphorylation of glycerol to yield sn-glycerol 3-phosphate. It also catalyzes the phosphorylation of dihydroxyacetone (DHA). Involved, together with the DHA kinase DhaKLM, in the metabolism of DHA. This is Glycerol kinase from Haloferax volcanii (strain ATCC 29605 / DSM 3757 / JCM 8879 / NBRC 14742 / NCIMB 2012 / VKM B-1768 / DS2) (Halobacterium volcanii).